The chain runs to 213 residues: Uracil phosphoribosyltransferase (213 aa).

5-phospho-alpha-D-ribose 1-diphosphate is bound by residues Arg78, Arg103, and Asp131–Thr139. Uracil contacts are provided by residues Ile197 and Gly202 to Ala204. Position 203 (Asp203) interacts with 5-phospho-alpha-D-ribose 1-diphosphate.

This sequence belongs to the UPRTase family. Requires Mg(2+) as cofactor.

The enzyme catalyses UMP + diphosphate = 5-phospho-alpha-D-ribose 1-diphosphate + uracil. It participates in pyrimidine metabolism; UMP biosynthesis via salvage pathway; UMP from uracil: step 1/1. Its activity is regulated as follows. Allosterically activated by GTP. Its function is as follows. Catalyzes the conversion of uracil and 5-phospho-alpha-D-ribose 1-diphosphate (PRPP) to UMP and diphosphate. This is Uracil phosphoribosyltransferase from Bifidobacterium adolescentis (strain ATCC 15703 / DSM 20083 / NCTC 11814 / E194a).